A 191-amino-acid polypeptide reads, in one-letter code: Small ribosomal subunit protein uS7 (191 aa).

Residues 56–80 (NKSGEQGDGDGESGGKAGGIKKRSL) are disordered.

It belongs to the universal ribosomal protein uS7 family. As to quaternary structure, part of the 30S ribosomal subunit. Contacts proteins S9 and S11.

Its function is as follows. One of the primary rRNA binding proteins, it binds directly to 16S rRNA where it nucleates assembly of the head domain of the 30S subunit. Is located at the subunit interface close to the decoding center, probably blocks exit of the E-site tRNA. This chain is Small ribosomal subunit protein uS7, found in Coxiella burnetii (strain RSA 493 / Nine Mile phase I).